We begin with the raw amino-acid sequence, 346 residues long: Cell division protein ZipA (346 aa).

At 1 to 6 (MEDLQL) the chain is on the periplasmic side. A helical membrane pass occupies residues 7 to 27 (VLFVLGAIAIVAVLVHGFWSI). Residues 28-346 (RRQQPKSLKD…DYLHRIRANA (319 aa)) are Cytoplasmic-facing. The interval 116-146 (EPSMAQPDFSLQSPTAKEQHRGPKASRQEPV) is disordered.

This sequence belongs to the ZipA family. As to quaternary structure, interacts with FtsZ via their C-terminal domains.

Its subcellular location is the cell inner membrane. Essential cell division protein that stabilizes the FtsZ protofilaments by cross-linking them and that serves as a cytoplasmic membrane anchor for the Z ring. Also required for the recruitment to the septal ring of downstream cell division proteins. The sequence is that of Cell division protein ZipA from Shewanella sp. (strain ANA-3).